The sequence spans 232 residues: Ribonuclease 3 (232 aa).

The region spanning 5–134 (ENLLFDRFGL…FLGALLLDKG (130 aa)) is the RNase III domain. Mg(2+) is bound at residue Glu-47. Asp-51 is an active-site residue. The Mg(2+) site is built by Asp-120 and Glu-123. Glu-123 is an active-site residue. The 70-residue stretch at 160–229 (DYKTKLQELL…AKNAFEKENH (70 aa)) folds into the DRBM domain.

It belongs to the ribonuclease III family. As to quaternary structure, homodimer. Mg(2+) serves as cofactor.

The protein resides in the cytoplasm. The enzyme catalyses Endonucleolytic cleavage to 5'-phosphomonoester.. Its function is as follows. Digests double-stranded RNA. Involved in the processing of primary rRNA transcript to yield the immediate precursors to the large and small rRNAs (23S and 16S). Processes some mRNAs, and tRNAs when they are encoded in the rRNA operon. Processes pre-crRNA and tracrRNA of type II CRISPR loci if present in the organism. The sequence is that of Ribonuclease 3 from Streptococcus gordonii (strain Challis / ATCC 35105 / BCRC 15272 / CH1 / DL1 / V288).